The primary structure comprises 325 residues: Small ribosomal subunit protein RACK1 (325 aa).

7 WD repeats span residues 5 to 48 (QMKL…WDVD), 58 to 99 (IGRP…WDLN), 100 to 141 (QGVS…WNTL), 143 to 186 (QCKY…WNLG), 187 to 227 (NCRL…LWDL), 228 to 268 (NEGK…WDLE), and 269 to 320 (DKKE…YQVS).

It belongs to the WD repeat G protein beta family. Ribosomal protein RACK1 subfamily.

Functionally, required for the expression of antimicrobial peptide nlp-29 in response to fungal infection or physical injury. This chain is Small ribosomal subunit protein RACK1 (rack-1), found in Caenorhabditis elegans.